Consider the following 154-residue polypeptide: 2S sulfur-rich seed storage protein 2 (154 aa).

The signal sequence occupies residues 1–22; that stretch reads MAKMSVVAAALLALLVLGQATA. Residues 29–52 are disordered; it reads TTLEEEQEENPRGRSEQQCREQME. The segment covering 37 to 52 has biased composition (basic and acidic residues); that stretch reads ENPRGRSEQQCREQME. Disulfide bonds link cysteine 47-cysteine 101, cysteine 60-cysteine 90, cysteine 91-cysteine 138, and cysteine 103-cysteine 145. The propeptide occupies 72-76; that stretch reads PYQNP. Residues 151–154 constitute a propeptide that is removed on maturation; the sequence is TAWL.

It belongs to the 2S seed storage albumins family. The mature protein consists of a small and a large chain linked by disulfide bonds.

In terms of biological role, this is a 2S seed storage protein. This chain is 2S sulfur-rich seed storage protein 2 (BE2S2), found in Bertholletia excelsa (Brazil nut).